Here is a 461-residue protein sequence, read N- to C-terminus: Pancreatic triacylglycerol lipase (461 aa).

A signal peptide spans 1-12; that stretch reads WTLSLLLGAVVG. Disulfide bonds link Cys-16–Cys-22 and Cys-103–Cys-114. Ser-165 functions as the Nucleophile in the catalytic mechanism. Residue Asp-189 is the Charge relay system of the active site. Residues Glu-200, Arg-203, Asp-205, and Asp-208 each coordinate Ca(2+). Cys-250 and Cys-274 are joined by a disulfide. His-276 acts as the Charge relay system in catalysis. 3 cysteine pairs are disulfide-bonded: Cys-298–Cys-309, Cys-312–Cys-317, and Cys-445–Cys-461. Residues 351–461 enclose the PLAT domain; sequence WRYRVDVTLS…EDVLLTLTAC (111 aa).

It belongs to the AB hydrolase superfamily. Lipase family. As to quaternary structure, forms a 1:1 stoichiometric complex with (pro)colipase/CLPS.

The protein resides in the secreted. It catalyses the reaction a triacylglycerol + H2O = a diacylglycerol + a fatty acid + H(+). The catalysed reaction is 1,2,3-tributanoylglycerol + H2O = dibutanoylglycerol + butanoate + H(+). It carries out the reaction 1,2,3-tri-(9Z-octadecenoyl)-glycerol + H2O = di-(9Z)-octadecenoylglycerol + (9Z)-octadecenoate + H(+). The enzyme catalyses all-trans-retinyl hexadecanoate + H2O = all-trans-retinol + hexadecanoate + H(+). It catalyses the reaction 1,2-di-(9Z-octadecenoyl)-glycerol + H2O = (9Z-octadecenoyl)-glycerol + (9Z)-octadecenoate + H(+). Inhibited by bile salts, is reactivated by (pro)colipase/CLPS. Plays an important role in fat metabolism. It preferentially splits the esters of long-chain fatty acids at positions 1 and 3, producing mainly 2-monoacylglycerol and free fatty acids, and shows considerably higher activity against insoluble emulsified substrates than against soluble ones. The sequence is that of Pancreatic triacylglycerol lipase (PNLIP) from Equus caballus (Horse).